Consider the following 144-residue polypeptide: Cytochrome c oxidase subunit 4 isoform 1, mitochondrial (144 aa).

At 1–73 (SVVKSEDYAL…SFAEMNRGSN (73 aa)) the chain is on the mitochondrial matrix side. K4 carries the N6-acetyllysine; alternate modification. Position 4 is an N6-succinyllysine; alternate (K4). Residues S31 and S33 each carry the phosphoserine modification. K35 bears the N6-acetyllysine; alternate mark. N6-succinyllysine; alternate is present on K35. An N6-acetyllysine modification is found at K42. The helical transmembrane segment at 74 to 99 (EWKTVVGAAMFFIGFTAILIILEKRY) threads the bilayer. The Mitochondrial intermembrane portion of the chain corresponds to 100–144 (VYGPLPHTFDKEWVAMQTKRMLDLKVNPVDGLASKWDYDKKEWKK).

This sequence belongs to the cytochrome c oxidase IV family. As to quaternary structure, component of the cytochrome c oxidase (complex IV, CIV), a multisubunit enzyme composed of 14 subunits. The complex is composed of a catalytic core of 3 subunits MT-CO1, MT-CO2 and MT-CO3, encoded in the mitochondrial DNA, and 11 supernumerary subunits COX4I, COX5A, COX5B, COX6A, COX6B, COX6C, COX7A, COX7B, COX7C, COX8 and NDUFA4, which are encoded in the nuclear genome. The complex exists as a monomer or a dimer and forms supercomplexes (SCs) in the inner mitochondrial membrane with NADH-ubiquinone oxidoreductase (complex I, CI) and ubiquinol-cytochrome c oxidoreductase (cytochrome b-c1 complex, complex III, CIII), resulting in different assemblies (supercomplex SCI(1)III(2)IV(1) and megacomplex MCI(2)III(2)IV(2)). Interacts with PHB2; the interaction decreases in absence of SPHK2. Interacts with AFG1L. Interacts with ABCB7; this interaction allows the regulation of cellular iron homeostasis and cellular reactive oxygen species (ROS) levels in cardiomyocytes. Interacts with FLVCR2; this interaction occurs in the absence of heme and is disrupted upon heme binding. Interacts with IRGC.

The protein localises to the mitochondrion inner membrane. It participates in energy metabolism; oxidative phosphorylation. Its function is as follows. Component of the cytochrome c oxidase, the last enzyme in the mitochondrial electron transport chain which drives oxidative phosphorylation. The respiratory chain contains 3 multisubunit complexes succinate dehydrogenase (complex II, CII), ubiquinol-cytochrome c oxidoreductase (cytochrome b-c1 complex, complex III, CIII) and cytochrome c oxidase (complex IV, CIV), that cooperate to transfer electrons derived from NADH and succinate to molecular oxygen, creating an electrochemical gradient over the inner membrane that drives transmembrane transport and the ATP synthase. Cytochrome c oxidase is the component of the respiratory chain that catalyzes the reduction of oxygen to water. Electrons originating from reduced cytochrome c in the intermembrane space (IMS) are transferred via the dinuclear copper A center (CU(A)) of subunit 2 and heme A of subunit 1 to the active site in subunit 1, a binuclear center (BNC) formed by heme A3 and copper B (CU(B)). The BNC reduces molecular oxygen to 2 water molecules using 4 electrons from cytochrome c in the IMS and 4 protons from the mitochondrial matrix. In Aotus azarae (Azara's night monkey), this protein is Cytochrome c oxidase subunit 4 isoform 1, mitochondrial (COX4I1).